Consider the following 258-residue polypeptide: Hemin import ATP-binding protein HmuV (258 aa).

One can recognise an ABC transporter domain in the interval 1–238; the sequence is MLDIDVSNLS…DILERTYRTP (238 aa). 34–41 contacts ATP; that stretch reads GENGAGKS.

The protein belongs to the ABC transporter superfamily. Heme (hemin) importer (TC 3.A.1.14.5) family. In terms of assembly, the complex is composed of two ATP-binding proteins (HmuV), two transmembrane proteins (HmuU) and a solute-binding protein (HmuT).

It localises to the cell inner membrane. Functionally, part of the ABC transporter complex HmuTUV involved in hemin import. Responsible for energy coupling to the transport system. This is Hemin import ATP-binding protein HmuV from Idiomarina loihiensis (strain ATCC BAA-735 / DSM 15497 / L2-TR).